Consider the following 201-residue polypeptide: 3-isopropylmalate dehydratase small subunit (201 aa).

The protein belongs to the LeuD family. LeuD type 1 subfamily. As to quaternary structure, heterodimer of LeuC and LeuD.

It carries out the reaction (2R,3S)-3-isopropylmalate = (2S)-2-isopropylmalate. It functions in the pathway amino-acid biosynthesis; L-leucine biosynthesis; L-leucine from 3-methyl-2-oxobutanoate: step 2/4. Its function is as follows. Catalyzes the isomerization between 2-isopropylmalate and 3-isopropylmalate, via the formation of 2-isopropylmaleate. This chain is 3-isopropylmalate dehydratase small subunit, found in Shigella boydii serotype 18 (strain CDC 3083-94 / BS512).